We begin with the raw amino-acid sequence, 429 residues long: Zinc metalloproteinase nas-17 (429 aa).

Residues methionine 1 to alanine 21 form the signal peptide. Asparagine 54 carries N-linked (GlcNAc...) asparagine glycosylation. The 190-residue stretch at arginine 62–glycine 251 folds into the Peptidase M12A domain. 4 disulfides stabilise this stretch: cysteine 104–cysteine 250, cysteine 125–cysteine 144, cysteine 252–cysteine 272, and cysteine 274–cysteine 283. Histidine 152 provides a ligand contact to Zn(2+). Glutamate 153 is an active-site residue. Zn(2+) contacts are provided by histidine 156 and histidine 162. The EGF-like domain maps to asparagine 245–asparagine 284.

It depends on Zn(2+) as a cofactor.

Its subcellular location is the secreted. In terms of biological role, metalloprotease. The chain is Zinc metalloproteinase nas-17 (nas-17) from Caenorhabditis elegans.